The sequence spans 692 residues: MAREFSLAKTRNIGIMAHVDAGKTTTTERILYYTGKIHKIGETHEGASQMDWMAQEQERGITITSAATTAQWDGHRVNIIDTPGHVDFTIEVQRSLRVLDGAVTVLDAQSGVEPQTETVWRQATEYRVPRIVFANKMDKIGADFLYSVSTLHDRLQANAHPIQLPIGSEDDFTGIIDLIKMKAEIYTNDLGTDIREEDIPAEYVDQANEYREKLVEAVAETDEELMMKYLEGEEITNEELMAGIRKATINVEFFPVLCGSAFKNKGVQLMLDAVIDYLPSPLDIPAIKGVNPDTDAEETRPASDEEPFAALAFKIMTDPFVGRLTFFRVYSGVLQSGSYVMNTSKGKRERIGRILQMHANTRQEIETVYSGDIAAAVGLKNTTTGDSLTDEKAQVILESIEVPEPVIQLMVEPKSKADQDKMGVALQKLAEEDPTFRVETNVETGETVIAGMGELHLDVLVDRMKREFKVEANVGAPQVSYRETFRASTQARGFFKRQSGGKGQFGDVWIEFTPNEEGKGFEFENAIVGGVVPREFIPAVEKGLIESMANGVLAGYPLVDVKAKLYDGSYHDVDSSETAFKIAASLALKEAAKSAQPSILEPMMLVTITAPEDNLGDVMGHVTARRGRVDGMEARGNIQVVRAYVPLAEMFGYATILRSATQGRGTFMMVFDHYEDVPKSVQEEIIKKNHGE.

A tr-type G domain is found at 8-282; the sequence is AKTRNIGIMA…AVIDYLPSPL (275 aa). Residues 17 to 24, 81 to 85, and 135 to 138 each bind GTP; these read AHVDAGKT, DTPGH, and NKMD.

This sequence belongs to the TRAFAC class translation factor GTPase superfamily. Classic translation factor GTPase family. EF-G/EF-2 subfamily.

The protein resides in the cytoplasm. Its function is as follows. Catalyzes the GTP-dependent ribosomal translocation step during translation elongation. During this step, the ribosome changes from the pre-translocational (PRE) to the post-translocational (POST) state as the newly formed A-site-bound peptidyl-tRNA and P-site-bound deacylated tRNA move to the P and E sites, respectively. Catalyzes the coordinated movement of the two tRNA molecules, the mRNA and conformational changes in the ribosome. This chain is Elongation factor G, found in Streptococcus uberis (strain ATCC BAA-854 / 0140J).